We begin with the raw amino-acid sequence, 206 residues long: Probable thymidylate kinase (206 aa).

7-14 is a binding site for ATP; the sequence is GIDGSGKS.

This sequence belongs to the thymidylate kinase family.

The catalysed reaction is dTMP + ATP = dTDP + ADP. The chain is Probable thymidylate kinase from Methanospirillum hungatei JF-1 (strain ATCC 27890 / DSM 864 / NBRC 100397 / JF-1).